The chain runs to 512 residues: Probable malate:quinone oxidoreductase (512 aa).

The protein belongs to the MQO family. Requires FAD as cofactor.

The enzyme catalyses (S)-malate + a quinone = a quinol + oxaloacetate. Its pathway is carbohydrate metabolism; tricarboxylic acid cycle; oxaloacetate from (S)-malate (quinone route): step 1/1. The chain is Probable malate:quinone oxidoreductase from Bradyrhizobium diazoefficiens (strain JCM 10833 / BCRC 13528 / IAM 13628 / NBRC 14792 / USDA 110).